The primary structure comprises 283 residues: MAVTTALVKELRERTGAGMMDCKKALTETDGDIELAIENMRKSGAAKAAKKAGNIAAEGAIIIKKNGNVAVLVEVNCQTDFVAKDVSFLAFADKVAEAAIADTVTIEDLQAKFEEARVELVTKIGENINVRRLQYITGENLVEYRHGDRIGVVVAGVADEETLKHVAMHVAASSPEYLTPSDVPADVVAKEQQVQIEIAMNEGKSAEIAEKMVVGRMKKFTGEVSLTGQAFIMEPKKTVGEILKEKNATVTSFVRVEVGEGIERKEEDFAAEVAAQIAAAKAK.

The segment at Thr79–Val82 is involved in Mg(2+) ion dislocation from EF-Tu.

It belongs to the EF-Ts family.

The protein localises to the cytoplasm. Associates with the EF-Tu.GDP complex and induces the exchange of GDP to GTP. It remains bound to the aminoacyl-tRNA.EF-Tu.GTP complex up to the GTP hydrolysis stage on the ribosome. The protein is Elongation factor Ts of Pseudoalteromonas translucida (strain TAC 125).